A 409-amino-acid chain; its full sequence is Protein ROOT PRIMORDIUM DEFECTIVE 1 (409 aa).

The region spanning Val47–Pro386 is the PORR domain.

In terms of tissue distribution, expressed in roots, hypocotyls, cotyledons and shoot apex.

In terms of biological role, involved in pre-arranging the maintenance of the active cell proliferation during root primordium development. Does not seem to be involved in cell cycle progression. The sequence is that of Protein ROOT PRIMORDIUM DEFECTIVE 1 (RPD1) from Arabidopsis thaliana (Mouse-ear cress).